The following is a 408-amino-acid chain: Putative odorant receptor 92a (408 aa).

Over 1–52 the chain is Cytoplasmic; that stretch reads MLFRKRKPKSDDEVITFDELTRFPMTFYKTIGEDLYSDRDPNVIRRYLLRFY. A helical transmembrane segment spans residues 53–73; that stretch reads LVLGFLNFNAYVVGEIAYFIV. A topological domain (extracellular) is located at residue histidine 74. A helical membrane pass occupies residues 75-95; that stretch reads IMSTTTLLEATAVAPCIGFSF. Residues 96 to 144 are Cytoplasmic-facing; the sequence is MADFKQFGLTVNRKRLVRLLDDLKEIFPLDLEAQRKYNVSFYRKHMNRV. A helical transmembrane segment spans residues 145 to 165; sequence MTLFTILCMTYTSSFSFYPAI. Over 166-209 the chain is Extracellular; sequence KSTIKYYLMGSEIFERNYGFHILFPYDAETDLTVYWFSYWGLAH. Residues 210 to 230 form a helical membrane-spanning segment; the sequence is CAYVAGVSYVCVDLLLIATIT. The Cytoplasmic segment spans residues 231-276; that stretch reads QLTMHFNFIANDLEAYEGGDHTDEENIKYLHNLVVYHARALDLSEE. A helical transmembrane segment spans residues 277–301; the sequence is VNNIFSFLILWNFIAASLVICFAGF. Residues 302 to 310 lie on the Extracellular side of the membrane; that stretch reads QITASNVED. Residues 311 to 331 traverse the membrane as a helical segment; it reads IVLYFIFFSASLVQVFVVCYY. Topologically, residues 332–378 are cytoplasmic; sequence GDEMISSSSRIGHSAFNQNWLPCSTKYKRILQFIIARSQKPASIRPP. The helical transmembrane segment at 379–399 threads the bilayer; that stretch reads TFPPISFNTFMKVISMSYQFF. Over 400 to 408 the chain is Extracellular; that stretch reads ALLRTTYYG.

Belongs to the insect chemoreceptor superfamily. Heteromeric odorant receptor channel (TC 1.A.69) family. Or49a subfamily. As to quaternary structure, interacts with Orco. Complexes exist early in the endomembrane system in olfactory sensory neurons (OSNs), coupling these complexes to the conserved ciliary trafficking pathway.

The protein resides in the cell membrane. Functionally, odorant receptor which mediates acceptance or avoidance behavior, depending on its substrates. The odorant receptor repertoire encodes a large collection of odor stimuli that vary widely in identity, intensity, and duration. May form a complex with Orco to form odorant-sensing units, providing sensitive and prolonged odorant signaling and calcium permeability. The protein is Putative odorant receptor 92a (Or92a) of Drosophila melanogaster (Fruit fly).